Reading from the N-terminus, the 362-residue chain is Biotin synthase (362 aa).

Residues 14-39 (AQRTPEPLPPTSQGLARPSHDVVRGP) are disordered. The region spanning 87 to 316 (HKGGPAALCG…ARDILVCGGR (230 aa)) is the Radical SAM core domain. C105, C109, and C112 together coordinate [4Fe-4S] cluster. Positions 181 and 241 each coordinate [2Fe-2S] cluster.

It belongs to the radical SAM superfamily. Biotin synthase family. As to quaternary structure, homodimer. Requires [4Fe-4S] cluster as cofactor. [2Fe-2S] cluster serves as cofactor.

The enzyme catalyses (4R,5S)-dethiobiotin + (sulfur carrier)-SH + 2 reduced [2Fe-2S]-[ferredoxin] + 2 S-adenosyl-L-methionine = (sulfur carrier)-H + biotin + 2 5'-deoxyadenosine + 2 L-methionine + 2 oxidized [2Fe-2S]-[ferredoxin]. The protein operates within cofactor biosynthesis; biotin biosynthesis; biotin from 7,8-diaminononanoate: step 2/2. In terms of biological role, catalyzes the conversion of dethiobiotin (DTB) to biotin by the insertion of a sulfur atom into dethiobiotin via a radical-based mechanism. This is Biotin synthase from Nitratidesulfovibrio vulgaris (strain ATCC 29579 / DSM 644 / CCUG 34227 / NCIMB 8303 / VKM B-1760 / Hildenborough) (Desulfovibrio vulgaris).